The following is a 339-amino-acid chain: Phenylalanine--tRNA ligase alpha subunit (339 aa).

E254 contributes to the Mg(2+) binding site.

It belongs to the class-II aminoacyl-tRNA synthetase family. Phe-tRNA synthetase alpha subunit type 1 subfamily. As to quaternary structure, tetramer of two alpha and two beta subunits. Requires Mg(2+) as cofactor.

It localises to the cytoplasm. It carries out the reaction tRNA(Phe) + L-phenylalanine + ATP = L-phenylalanyl-tRNA(Phe) + AMP + diphosphate + H(+). The chain is Phenylalanine--tRNA ligase alpha subunit from Clostridium botulinum (strain Alaska E43 / Type E3).